An 823-amino-acid chain; its full sequence is High affinity cAMP-specific and IBMX-insensitive 3',5'-cyclic phosphodiesterase 8A (823 aa).

Positions 1–55 are disordered; sequence MGCAPSIHTSENRTFSHSDGEDEDVDVDVPGPAPRSIQRWSTAPGLVEPQPRDNG. Residues 10–19 are compositionally biased toward basic and acidic residues; sequence SENRTFSHSD. In terms of domain architecture, PAS spans 209-280; that stretch reads ACNSVFTALE…AINSCVTVDK (72 aa). Residues 283–325 form the PAC domain; it reads QGVYHTQKKNGDNIQQNVKIIPVIGQGGKIRHYVSIIRVCNGN. Residues 338 to 373 form a disordered region; that stretch reads DSQTDNQAGKHKDRRKHSMDAKAVSSRTSDVSSQRR. Phosphoserine; by PKA is present on S355. Phosphoserine occurs at positions 382 and 452. Residue Y456 is modified to Phosphotyrosine. A PDEase domain is found at 475-814; that stretch reads SLHDVPPRIA…RYWKGLDEKK (340 aa). H551 serves as the catalytic Proton donor. The a divalent metal cation site is built by H555, H591, D592, and D720.

The protein belongs to the cyclic nucleotide phosphodiesterase family. PDE8 subfamily. In terms of assembly, interacts with RAF1. The interaction promotes RAF1 activity. A divalent metal cation is required as a cofactor. Phosphorylated at Ser-355 by PKA under elevated cAMP conditions, this enhances catalytic activity. Expressed in multiple tissues, with highest levels in testis, followed by liver, heart, skeletal muscle, and kidney. In the testis, expressed specifically in the seminiferous tubules, in postmitotic pachytene spermatocytes. Low expression, if any, in lung, smooth muscle, pancreas, thyroid, thymus, submaxillary gland, spleen, prostate, epididymus, uterus.

The catalysed reaction is 3',5'-cyclic AMP + H2O = AMP + H(+). The protein operates within purine metabolism; 3',5'-cyclic AMP degradation; AMP from 3',5'-cyclic AMP: step 1/1. Its activity is regulated as follows. Inhibited by dipyridimole. Insensitive to selective PDE inhibitor rolipram and to the non-selective inhibitor, IBMX. Hydrolyzes the second messenger cAMP, which is a key regulator of many important physiological processes. May be involved in maintaining basal levels of the cyclic nucleotide and/or in the cAMP regulation of germ cell development. Binding to RAF1 reduces RAF1 'Ser-259' inhibitory-phosphorylation and stimulates RAF1-dependent EGF-activated ERK-signaling. Protects against cell death induced by hydrogen peroxide and staurosporine. This Mus musculus (Mouse) protein is High affinity cAMP-specific and IBMX-insensitive 3',5'-cyclic phosphodiesterase 8A (Pde8a).